An 803-amino-acid polypeptide reads, in one-letter code: Leucine--tRNA ligase (803 aa).

The 'HIGH' region motif lies at 40–51 (PYPSGAGLHVGH). A 'KMSKS' region motif is present at residues 575-579 (KMSKS). Lys-578 is an ATP binding site.

This sequence belongs to the class-I aminoacyl-tRNA synthetase family.

The protein resides in the cytoplasm. It carries out the reaction tRNA(Leu) + L-leucine + ATP = L-leucyl-tRNA(Leu) + AMP + diphosphate. The polypeptide is Leucine--tRNA ligase (Listeria monocytogenes serotype 4a (strain HCC23)).